Here is a 440-residue protein sequence, read N- to C-terminus: Asparagine--tRNA ligase (440 aa).

This sequence belongs to the class-II aminoacyl-tRNA synthetase family. Homodimer.

It is found in the cytoplasm. The enzyme catalyses tRNA(Asn) + L-asparagine + ATP = L-asparaginyl-tRNA(Asn) + AMP + diphosphate + H(+). This Roseiflexus castenholzii (strain DSM 13941 / HLO8) protein is Asparagine--tRNA ligase.